Here is a 426-residue protein sequence, read N- to C-terminus: tRNA(Ile)-lysidine synthase (426 aa).

An ATP-binding site is contributed by 27-32; that stretch reads SGGADS.

The protein belongs to the tRNA(Ile)-lysidine synthase family.

The protein resides in the cytoplasm. The catalysed reaction is cytidine(34) in tRNA(Ile2) + L-lysine + ATP = lysidine(34) in tRNA(Ile2) + AMP + diphosphate + H(+). Its function is as follows. Ligates lysine onto the cytidine present at position 34 of the AUA codon-specific tRNA(Ile) that contains the anticodon CAU, in an ATP-dependent manner. Cytidine is converted to lysidine, thus changing the amino acid specificity of the tRNA from methionine to isoleucine. The protein is tRNA(Ile)-lysidine synthase of Bacteroides thetaiotaomicron (strain ATCC 29148 / DSM 2079 / JCM 5827 / CCUG 10774 / NCTC 10582 / VPI-5482 / E50).